A 1234-amino-acid polypeptide reads, in one-letter code: DNA-directed RNA polymerase subunit beta (1234 aa).

Residues 1187–1234 form a disordered region; sequence GREDAPPEEVYEEEYEEEPEELPEDIDFEPDNFDIDSEDLFMDDDYDG. The segment covering 1192 to 1234 has biased composition (acidic residues); the sequence is PPEEVYEEEYEEEPEELPEDIDFEPDNFDIDSEDLFMDDDYDG.

This sequence belongs to the RNA polymerase beta chain family. As to quaternary structure, the RNAP catalytic core consists of 2 alpha, 1 beta, 1 beta' and 1 omega subunit. When a sigma factor is associated with the core the holoenzyme is formed, which can initiate transcription.

The catalysed reaction is RNA(n) + a ribonucleoside 5'-triphosphate = RNA(n+1) + diphosphate. Functionally, DNA-dependent RNA polymerase catalyzes the transcription of DNA into RNA using the four ribonucleoside triphosphates as substrates. The sequence is that of DNA-directed RNA polymerase subunit beta from Caldanaerobacter subterraneus subsp. tengcongensis (strain DSM 15242 / JCM 11007 / NBRC 100824 / MB4) (Thermoanaerobacter tengcongensis).